The chain runs to 221 residues: Cytidylate kinase (221 aa).

Position 11 to 19 (11 to 19 (GPTASGKGT)) interacts with ATP.

The protein belongs to the cytidylate kinase family. Type 1 subfamily.

It is found in the cytoplasm. The catalysed reaction is CMP + ATP = CDP + ADP. The enzyme catalyses dCMP + ATP = dCDP + ADP. This is Cytidylate kinase from Cupriavidus pinatubonensis (strain JMP 134 / LMG 1197) (Cupriavidus necator (strain JMP 134)).